We begin with the raw amino-acid sequence, 389 residues long: 8-amino-7-oxononanoate synthase (389 aa).

Position 19 (R19) interacts with substrate. 106 to 107 (GY) contributes to the pyridoxal 5'-phosphate binding site. Substrate is bound at residue H131. Positions 176, 204, and 233 each coordinate pyridoxal 5'-phosphate. Residue K236 is modified to N6-(pyridoxal phosphate)lysine. Residue T350 coordinates substrate.

This sequence belongs to the class-II pyridoxal-phosphate-dependent aminotransferase family. BioF subfamily. As to quaternary structure, homodimer. Pyridoxal 5'-phosphate serves as cofactor.

It catalyses the reaction 6-carboxyhexanoyl-[ACP] + L-alanine + H(+) = (8S)-8-amino-7-oxononanoate + holo-[ACP] + CO2. It functions in the pathway cofactor biosynthesis; biotin biosynthesis. Its function is as follows. Catalyzes the decarboxylative condensation of pimeloyl-[acyl-carrier protein] and L-alanine to produce 8-amino-7-oxononanoate (AON), [acyl-carrier protein], and carbon dioxide. This chain is 8-amino-7-oxononanoate synthase, found in Ectopseudomonas mendocina (strain ymp) (Pseudomonas mendocina).